A 119-amino-acid polypeptide reads, in one-letter code: Ribonuclease P protein component (119 aa).

This sequence belongs to the RnpA family. Consists of a catalytic RNA component (M1 or rnpB) and a protein subunit.

It catalyses the reaction Endonucleolytic cleavage of RNA, removing 5'-extranucleotides from tRNA precursor.. Its function is as follows. RNaseP catalyzes the removal of the 5'-leader sequence from pre-tRNA to produce the mature 5'-terminus. It can also cleave other RNA substrates such as 4.5S RNA. The protein component plays an auxiliary but essential role in vivo by binding to the 5'-leader sequence and broadening the substrate specificity of the ribozyme. This is Ribonuclease P protein component from Listeria welshimeri serovar 6b (strain ATCC 35897 / DSM 20650 / CCUG 15529 / CIP 8149 / NCTC 11857 / SLCC 5334 / V8).